A 226-amino-acid polypeptide reads, in one-letter code: Brachyurin (226 aa).

The region spanning 1 to 223 is the Peptidase S1 domain; the sequence is IVGGVEAVPN…FLDWIQTQTG (223 aa). Residues C26 and C42 are joined by a disulfide bond. Catalysis depends on charge relay system residues H41 and D87. 2 cysteine pairs are disulfide-bonded: C151/C164 and C174/C200. S178 serves as the catalytic Charge relay system.

Belongs to the peptidase S1 family.

It carries out the reaction Hydrolysis of proteins, with broad specificity for peptide bonds. Native collagen is cleaved about 75% of the length of the molecule from the N-terminus. Low activity on small molecule substrates of both trypsin and chymotrypsin.. This enzyme is a serine protease capable of degrading the native triple helix of collagen. In Leptuca pugilator (Atlantic sand fiddler crab), this protein is Brachyurin.